Here is a 525-residue protein sequence, read N- to C-terminus: MASPRELDEESPVYLVVSGIPAVLRSAQLRSYFSQFREQRGGGFLCFHYRHRPERGPPQASPEAARAGPDPAAEDPVLAQAPASDARAVRARGSAAAQTRTCCCVVSVRGAAQAQRLLRMYSGRRWLDSQGTWLPGRCLIRRLRLPTEVSDLGSFPFKTRKELQSRRAENEAFTLADLKQLPELNPPVLMPNGNVGTPLRVFLELIRSCRLPPRIITQLQLQFPKTGSSRRYGNVPFLYEDSETVEQEEHVYTAEGEEIPQGSCSEDPAAGSFDEPEDEGQQQEEEEESGSEEDDDRGEEWERHEALHEDVTGQERTTERLFEEEIELKWEKGGSGLVFYTDAQFWQEEEGDFDEQTADDWDVDMSVYYDRDGGDKDARDSVQMRLERRLREGQEDGSVLGGQVGTFERHTKGIGRKVMERQGWAEGQGLGSRCSGVPEALDGDGQHPRCKRGLGYHGEKLQPFRQLKRPRRTGLGLISTIYDEPLPQDQGETLLRRQPPTSMKFRTDMTFVKGSSCALDRPEPE.

Disordered regions lie at residues 54–85 and 246–317; these read ERGP…PASD and EQEE…QERT. Residues 274-299 are compositionally biased toward acidic residues; the sequence is DEPEDEGQQQEEEEESGSEEDDDRGE. Residues 300–317 are compositionally biased toward basic and acidic residues; that stretch reads EWERHEALHEDVTGQERT. In terms of domain architecture, G-patch spans 411–459; it reads TKGIGRKVMERQGWAEGQGLGSRCSGVPEALDGDGQHPRCKRGLGYHGE.

As to quaternary structure, interacts with mitochondrial MAVS; the interaction is markedly increased upon viral infection.

The protein resides in the nucleus. It is found in the cytoplasm. Functionally, involved in transcriptional regulation. It is able to activate transcription from CXCR4 promoter and therefore it might control neural crest cell migration involved in ocular and craniofacial development. Is a negative regulator of immune antiviral response, acting via down-regulation of RIG-I-like receptors signaling and inhibition of type I interferon production. The control mechanism involves interaction with mitochondrial MAVS and inhibition of MAVS assembly with downstream proteins implicated in antiviral response, such as TBK1 and TRAF6. This is G patch domain-containing protein 3 (Gpatch3) from Mus musculus (Mouse).